Here is a 67-residue protein sequence, read N- to C-terminus: Protein AaeX (67 aa).

The next 2 membrane-spanning stretches (helical) occupy residues 10–30 (FGLSFPPVFFVLMVSLTLFFV) and 43–63 (FVWHPALFNSALFCCLFYLLF).

It belongs to the AaeX family.

The protein localises to the cell membrane. The protein is Protein AaeX of Pectobacterium atrosepticum (strain SCRI 1043 / ATCC BAA-672) (Erwinia carotovora subsp. atroseptica).